Reading from the N-terminus, the 263-residue chain is 3-deoxy-manno-octulosonate cytidylyltransferase (263 aa).

The protein belongs to the KdsB family.

Its subcellular location is the cytoplasm. The catalysed reaction is 3-deoxy-alpha-D-manno-oct-2-ulosonate + CTP = CMP-3-deoxy-beta-D-manno-octulosonate + diphosphate. Its pathway is nucleotide-sugar biosynthesis; CMP-3-deoxy-D-manno-octulosonate biosynthesis; CMP-3-deoxy-D-manno-octulosonate from 3-deoxy-D-manno-octulosonate and CTP: step 1/1. It participates in bacterial outer membrane biogenesis; lipopolysaccharide biosynthesis. Functionally, activates KDO (a required 8-carbon sugar) for incorporation into bacterial lipopolysaccharide in Gram-negative bacteria. This Burkholderia thailandensis (strain ATCC 700388 / DSM 13276 / CCUG 48851 / CIP 106301 / E264) protein is 3-deoxy-manno-octulosonate cytidylyltransferase.